The following is a 456-amino-acid chain: Glutamyl-tRNA reductase (456 aa).

Residues 49 to 52 (TCNR), Ser109, 114 to 116 (EQQ), and Gln120 contribute to the substrate site. Cys50 functions as the Nucleophile in the catalytic mechanism. Position 189-194 (189-194 (GAGSMG)) interacts with NADP(+).

It belongs to the glutamyl-tRNA reductase family. In terms of assembly, homodimer.

The enzyme catalyses (S)-4-amino-5-oxopentanoate + tRNA(Glu) + NADP(+) = L-glutamyl-tRNA(Glu) + NADPH + H(+). Its pathway is porphyrin-containing compound metabolism; protoporphyrin-IX biosynthesis; 5-aminolevulinate from L-glutamyl-tRNA(Glu): step 1/2. Its function is as follows. Catalyzes the NADPH-dependent reduction of glutamyl-tRNA(Glu) to glutamate 1-semialdehyde (GSA). The polypeptide is Glutamyl-tRNA reductase (Mycolicibacterium vanbaalenii (strain DSM 7251 / JCM 13017 / BCRC 16820 / KCTC 9966 / NRRL B-24157 / PYR-1) (Mycobacterium vanbaalenii)).